We begin with the raw amino-acid sequence, 429 residues long: Proton/sodium-glutamate symport protein (429 aa).

The Cytoplasmic segment spans residues 1-5 (MKRIK). A helical membrane pass occupies residues 6–26 (FGLATQIFVGLILGVIVGVIW). The Extracellular segment spans residues 27–45 (YGNPALPTYLQPIGDLFLR). Residues 46 to 66 (LIKMIVIPIVVSSLIIGVAGA) traverse the membrane as a helical segment. Residues 67–79 (GNGKQVGKLGFRT) are Cytoplasmic-facing. The chain crosses the membrane as a helical span at residues 80–100 (ILYFEIITTFAIILGLALANI). The Extracellular segment spans residues 101–150 (FHPGTGVNIHEAQKSDISQYVETEKEQSNKSVAETFLHIVPTNFFQSLVE). A helical membrane pass occupies residues 151–171 (GDLLAIICFTVLFALGISAIG). The Cytoplasmic portion of the chain corresponds to 172-190 (ERGKPVLAFFEGVSHAMFH). A helical transmembrane segment spans residues 191-211 (VVNLVMKVAPFGVFALIGVTV). The Extracellular portion of the chain corresponds to 212 to 224 (SKFGLGSLISLGK). Residues 225-245 (LVGLVYVALAFFLIVIFGIVA) traverse the membrane as a helical segment. K246 is a topological domain (cytoplasmic). The chain crosses the membrane as a helical span at residues 247–267 (IAGISIFKFLAYMKDEILLAF). Residues 268–290 (STSSSETVLPRIMEKMEKIGCPK) are Extracellular-facing. The chain crosses the membrane as a helical span at residues 291–311 (GIVSFVIPIGYTFNLDGSVLY). Residues 312 to 321 (QSIAALFLAQ) are Cytoplasmic-facing. Residues 322-342 (VYGIDLTIWHQITLVLVLMVT) form a helical membrane-spanning segment. Residues 343-353 (SKGMAAVPGTS) are Extracellular-facing. A helical transmembrane segment spans residues 354–374 (FVVLLATLGTIGVPAEGLAFI). The Cytoplasmic portion of the chain corresponds to 375–429 (AGVDRIMDMARTVVNLTGNALAAVVMSKWEGMFNPAKAETVMSQSKTEQNATISG).

Belongs to the dicarboxylate/amino acid:cation symporter (DAACS) (TC 2.A.23) family. As to quaternary structure, homotrimer. Interacts with FloT.

It is found in the cell membrane. The protein resides in the membrane raft. This carrier protein is part of the Na(+)-dependent, binding-protein-independent glutamate-aspartate transport system. The sequence is that of Proton/sodium-glutamate symport protein (gltT) from Bacillus subtilis (strain 168).